Here is a 57-residue protein sequence, read N- to C-terminus: uncharacterized protein (57 aa).

This is an uncharacterized protein from Dictyostelium discoideum (Social amoeba).